A 99-amino-acid chain; its full sequence is Transcriptional repressor PagR (99 aa).

Residues 9 to 99 form the HTH arsR-type domain; the sequence is IEYMSLEDDA…GIIKLLNPIQ (91 aa). A DNA-binding region (H-T-H motif) is located at residues 43-62; that stretch reads NVTQIIQILKLPQSTVSQHL.

Functionally, represses the expression of the pagA and atxA genes. The chain is Transcriptional repressor PagR (pagR) from Bacillus anthracis.